A 168-amino-acid chain; its full sequence is Putative ankyrin repeat protein RBE_1411 (168 aa).

ANK repeat units follow at residues 59 to 88 (TIFSELSIAIDKGNLEPLKNFLKNNKLQHK), 98 to 127 (YGDTPLCYAAEKNNFEVAKILIKYGADLTI), and 131 to 160 (KGETPIELFSQYGNREAVNYLQHCLDILGN).

The chain is Putative ankyrin repeat protein RBE_1411 from Rickettsia bellii (strain RML369-C).